A 364-amino-acid polypeptide reads, in one-letter code: Ribosomal RNA large subunit methyltransferase F (364 aa).

The disordered stretch occupies residues 1 to 28 (MTNKRKSAKPLEPAKRTPKLRTKKSRDL).

The protein belongs to the methyltransferase superfamily. METTL16/RlmF family.

It localises to the cytoplasm. It catalyses the reaction adenosine(1618) in 23S rRNA + S-adenosyl-L-methionine = N(6)-methyladenosine(1618) in 23S rRNA + S-adenosyl-L-homocysteine + H(+). Its function is as follows. Specifically methylates the adenine in position 1618 of 23S rRNA. The polypeptide is Ribosomal RNA large subunit methyltransferase F (Vibrio vulnificus (strain YJ016)).